We begin with the raw amino-acid sequence, 850 residues long: Transcription initiation factor TFIID subunit 4B (850 aa).

The interval 99–240 (GTTTIQLPAN…TPSNDARLKA (142 aa)) is sufficient for interaction with ZNF628. The TAFH domain maps to 256–353 (ENVKKCKNFL…VKEVSGDVVI (98 aa)). The tract at residues 504–526 (PSTLLPQAAGIPQTAKVKQLVVQ) is required for interaction with P65/RELA. The Nuclear export signal signature appears at 509–549 (PQAAGIPQTAKVKQLVVQQPSGSSVNHVTSISHSSPLSTQN). Phosphoserine is present on Ser-584. The region spanning 642 to 691 (PFLVIGALQKRILDIGKKHDITELNSDAVNLISHATQERLRGLLEKLTTI) is the Histone-fold domain. Residues 788–812 (KRPLESGNESFKDNPSTSGTSSLTA) are disordered. A compositionally biased stretch (polar residues) spans 794 to 812 (GNESFKDNPSTSGTSSLTA). A required for interaction with TAF12 region spans residues 818 to 850 (PRITRICLRDLIFCMEQEREMKYSRALYLALLK).

It belongs to the TAF4 family. As to quaternary structure, TFIID is composed of TATA binding protein (TBP) and a number of TBP-associated factors (TAFs). Heterodimerizes with TAF12/TFII20 via the C-terminal H2A-like histone-fold domain. This heterodimer forms a histone-like octamer with the TAF6/TAFII70-TAF9/TAFII31 heterodimer. Interacts with P65/RELA homodimers and P65/RELA-REL heterodimers. Interaction with POU2AF1, via its C-terminal activation domain, is required for octamer-dependent transcription. Interacts with ZNF628. As to expression, highly expressed in the testes and ovary, whereas lower levels are detected in most other tissues.

It localises to the nucleus. It is found in the cytoplasm. Its function is as follows. Cell type-specific subunit of the general transcription factor TFIID that may function as a gene-selective coactivator in certain cells. TFIID is a multimeric protein complex that plays a central role in mediating promoter responses to various activators asond repressors. TAF4B is a transcriptional coactivator of the p65/RELA NF-kappa-B subunit. Involved in the activation of a subset of antiapoptotic genes including TNFAIP3. Through interaction with OCBA/POU2AF1, acts as a coactivator of B-cell-specific transcription. Plays a role in spermiogenesis and oogenesis. This chain is Transcription initiation factor TFIID subunit 4B (Taf4b), found in Mus musculus (Mouse).